A 177-amino-acid polypeptide reads, in one-letter code: Large ribosomal subunit protein uL5m (177 aa).

This sequence belongs to the universal ribosomal protein uL5 family.

It is found in the mitochondrion. The chain is Large ribosomal subunit protein uL5m (RPL5) from Acanthamoeba castellanii (Amoeba).